A 1456-amino-acid chain; its full sequence is Sterol 3-beta-glucosyltransferase (1456 aa).

Residues 60 to 70 show a composition bias toward acidic residues; the sequence is ESDEEDGDEVE. Disordered regions lie at residues 60 to 113 and 128 to 156; these read ESDE…SISH and LSPH…TQSE. The segment covering 71-104 has biased composition (low complexity); it reads TPSTTTTAVSPSATMSAPSPTATAPTPHSGTHTP. The span at 137 to 146 shows a compositional bias: basic and acidic residues; sequence SSHEASRRGS. One can recognise a GRAM 1 domain in the interval 200–247; sequence QKLKGFAALDVDEQLIADYPVWLLKNVLIQGHLYITAKHMCFLSYLPR. One can recognise a PH domain in the interval 251 to 351; the sequence is ANIRSGTLVK…WVKALQKEIF (101 aa). Disordered stretches follow at residues 462 to 512 and 524 to 776; these read HSAH…PRLP and DKCD…QDTF. Basic and acidic residues predominate over residues 496–508; the sequence is QPHERDEKRDSKL. Polar residues predominate over residues 556–567; that stretch reads LASQRTSSSTLF. 2 stretches are compositionally biased toward low complexity: residues 576–606 and 647–676; these read SQPT…PASA and GGAT…SSPG. The span at 677 to 696 shows a compositional bias: gly residues; it reads TPGGLGGPGAVGAGGPGVMG. The span at 719–735 shows a compositional bias: low complexity; sequence APHDPAAAAAAADAAAP. One can recognise a GRAM 2 domain in the interval 827 to 893; sequence ERFQKRFALG…KVVENATKDS (67 aa). Residues serine 1004, arginine 1005, aspartate 1007, asparagine 1279, asparagine 1307, histidine 1310, histidine 1323, serine 1326, glycine 1327, threonine 1328, aspartate 1347, and glutamine 1348 each contribute to the UDP-alpha-D-glucose site.

This sequence belongs to the glycosyltransferase 28 family.

The protein resides in the cytoplasm. It is found in the membrane. It carries out the reaction a sterol + UDP-alpha-D-glucose = a sterol 3-beta-D-glucoside + UDP + H(+). The catalysed reaction is ergosterol + UDP-alpha-D-glucose = ergosteryl 3-beta-D-glucoside + UDP + H(+). In terms of biological role, sterol glycosyltransferase responsible for the glycosylation of ergosterol to form ergosterol-glucoside. The sequence is that of Sterol 3-beta-glucosyltransferase from Yarrowia lipolytica (strain CLIB 122 / E 150) (Yeast).